The sequence spans 312 residues: HPr kinase/phosphorylase (312 aa).

Active-site residues include histidine 139 and lysine 160. Position 154–161 (154–161 (GDSGIGKS)) interacts with ATP. A Mg(2+)-binding site is contributed by serine 161. Residue aspartate 178 is the Proton acceptor; for phosphorylation activity. Proton donor; for dephosphorylation activity of the active site. An important for the catalytic mechanism of both phosphorylation and dephosphorylation region spans residues 202–211 (IEIRGVGIID). Glutamate 203 provides a ligand contact to Mg(2+). Arginine 244 is a catalytic residue. The tract at residues 265 to 270 (PVKTGR) is important for the catalytic mechanism of dephosphorylation.

The protein belongs to the HPrK/P family. As to quaternary structure, homohexamer. The cofactor is Mg(2+).

The catalysed reaction is [HPr protein]-L-serine + ATP = [HPr protein]-O-phospho-L-serine + ADP + H(+). It catalyses the reaction [HPr protein]-O-phospho-L-serine + phosphate + H(+) = [HPr protein]-L-serine + diphosphate. Its function is as follows. Catalyzes the ATP- as well as the pyrophosphate-dependent phosphorylation of a specific serine residue in HPr, a phosphocarrier protein of the phosphoenolpyruvate-dependent sugar phosphotransferase system (PTS). HprK/P also catalyzes the pyrophosphate-producing, inorganic phosphate-dependent dephosphorylation (phosphorolysis) of seryl-phosphorylated HPr (P-Ser-HPr). The two antagonistic activities of HprK/P are regulated by several intracellular metabolites, which change their concentration in response to the absence or presence of rapidly metabolisable carbon sources (glucose, fructose, etc.) in the growth medium. Therefore, by controlling the phosphorylation state of HPr, HPrK/P is a sensor enzyme that plays a major role in the regulation of carbon metabolism and sugar transport: it mediates carbon catabolite repression (CCR), and regulates PTS-catalyzed carbohydrate uptake and inducer exclusion. This chain is HPr kinase/phosphorylase, found in Streptococcus pneumoniae (strain ATCC BAA-255 / R6).